A 480-amino-acid chain; its full sequence is ATP synthase subunit beta 1 (480 aa).

154-161 (GGAGVGKT) is a binding site for ATP.

Belongs to the ATPase alpha/beta chains family. In terms of assembly, F-type ATPases have 2 components, CF(1) - the catalytic core - and CF(0) - the membrane proton channel. CF(1) has five subunits: alpha(3), beta(3), gamma(1), delta(1), epsilon(1). CF(0) has four main subunits: a(1), b(1), b'(1) and c(9-12).

Its subcellular location is the cell inner membrane. The enzyme catalyses ATP + H2O + 4 H(+)(in) = ADP + phosphate + 5 H(+)(out). Produces ATP from ADP in the presence of a proton gradient across the membrane. The catalytic sites are hosted primarily by the beta subunits. The chain is ATP synthase subunit beta 1 from Chlorobaculum tepidum (strain ATCC 49652 / DSM 12025 / NBRC 103806 / TLS) (Chlorobium tepidum).